The primary structure comprises 553 residues: Rhodopsin kinase GRK7 (553 aa).

Residue Ser36 is modified to Phosphoserine; by PKA. The 121-residue stretch at 56–176 (FHSLCEQQPI…VTSAFYDKFL (121 aa)) folds into the RGS domain. One can recognise a Protein kinase domain in the interval 191 to 454 (FTEFRVLGKG…SDDPRKHHFF (264 aa)). ATP is bound by residues 197–205 (LGKGGFGEV) and Lys220. Catalysis depends on Asp316, which acts as the Proton acceptor. In terms of domain architecture, AGC-kinase C-terminal spans 455–520 (KTINFPRLEA…GAVPIAWQEE (66 aa)). Cysteine methyl ester is present on Cys550. The S-geranylgeranyl cysteine moiety is linked to residue Cys550. The propeptide at 551 to 553 (LLL) is removed in mature form.

This sequence belongs to the protein kinase superfamily. AGC Ser/Thr protein kinase family. GPRK subfamily. In terms of assembly, interacts (when prenylated) with PDE6D; this promotes release from membranes. In terms of processing, autophosphorylated in vitro at Ser-490. Phosphorylation at Ser-36 is regulated by light and activated by cAMP. In terms of tissue distribution, retinal cones, outer and inner segments.

The protein resides in the membrane. It catalyses the reaction L-threonyl-[rhodopsin] + ATP = O-phospho-L-threonyl-[rhodopsin] + ADP + H(+). It carries out the reaction L-seryl-[rhodopsin] + ATP = O-phospho-L-seryl-[rhodopsin] + ADP + H(+). Its activity is regulated as follows. Inhibited by phosphorylation of Ser-36. In terms of biological role, retina-specific kinase involved in the shutoff of the photoresponse and adaptation to changing light conditions via cone opsin phosphorylation, including rhodopsin (RHO). This is Rhodopsin kinase GRK7 (GRK7) from Homo sapiens (Human).